The chain runs to 193 residues: Ion-translocating oxidoreductase complex subunit A (193 aa).

6 consecutive transmembrane segments (helical) span residues 5–25 (LLLF…FLGL), 47–67 (FVMT…LIPL), 72–92 (LRTL…EMVV), 102–122 (LLGI…VALL), 134–154 (ALYG…FAAI), and 171–191 (AIAL…SGLV).

Belongs to the NqrDE/RnfAE family. In terms of assembly, the complex is composed of six subunits: RnfA, RnfB, RnfC, RnfD, RnfE and RnfG.

It localises to the cell inner membrane. In terms of biological role, part of a membrane-bound complex that couples electron transfer with translocation of ions across the membrane. The chain is Ion-translocating oxidoreductase complex subunit A from Citrobacter koseri (strain ATCC BAA-895 / CDC 4225-83 / SGSC4696).